A 627-amino-acid polypeptide reads, in one-letter code: MLDPTYPAFPIFAFLGIVCCLVPLPWHLQSWNSGTCFLMIWTAVACLNMFVNSIIWKDHAQNVAPVWCEISIRITLGASVGIPASSLCIVRRLYSIAKKFRAVMVDALICVLFPILYIILQIVVQGHRFNILENIGCFPAIINTPLTYPLTFMWPVLIGVISFIYSTLALIQFNRHRLQFTQFLHSNSTLSVSRYLRLMALAMTEMMCTTPMGVFVIILNAKATPVSPYVSWAVTHYGYGRIDQVPAIIWRSNRLLVASYELTRWSSPAIALIFFFYFGFAQEARRNYAAAWGWVRRAVGLPERVPSLPTTKKPFSSSDKGSGFAEKFAAKAKGLSSFNVKDFTSEFTSKAHDFTFKAKQYTLPRPMPQTPSSSGFSSSDSTRFGSSVDGKELPSPTTKEFSSPIPIHLSGMQTLASFDSNKDLPSPPAYDVEAQYGPYNIDNRVSYHIADAGVRASYPMGVAYSSDSEHRRIVPQHSTVPQHNTADEPASPALPDTPSSCSSSATFSTLQSRDFIVLPSTTDVTRGTGSLPTRRSPAGPPRLPSLSQLFGISSMTRERDVEAQVEDVATGTASPTTTAPAPASTTIAPASATMAPATTTTAPTTIANIQRGEPDVPASPRTHRASV.

Topologically, residues 1-7 are extracellular; it reads MLDPTYP. Residues 8-28 form a helical membrane-spanning segment; sequence AFPIFAFLGIVCCLVPLPWHL. The Cytoplasmic segment spans residues 29 to 35; sequence QSWNSGT. A helical membrane pass occupies residues 36–56; sequence CFLMIWTAVACLNMFVNSIIW. The Extracellular segment spans residues 57 to 69; sequence KDHAQNVAPVWCE. Residues 70 to 90 form a helical membrane-spanning segment; the sequence is ISIRITLGASVGIPASSLCIV. Residues 91 to 102 lie on the Cytoplasmic side of the membrane; the sequence is RRLYSIAKKFRA. A helical transmembrane segment spans residues 103–123; that stretch reads VMVDALICVLFPILYIILQIV. The Extracellular portion of the chain corresponds to 124–150; sequence VQGHRFNILENIGCFPAIINTPLTYPL. The chain crosses the membrane as a helical span at residues 151–171; the sequence is TFMWPVLIGVISFIYSTLALI. Residues 172 to 197 lie on the Cytoplasmic side of the membrane; sequence QFNRHRLQFTQFLHSNSTLSVSRYLR. The helical transmembrane segment at 198-218 threads the bilayer; sequence LMALAMTEMMCTTPMGVFVII. Topologically, residues 219-260 are extracellular; it reads LNAKATPVSPYVSWAVTHYGYGRIDQVPAIIWRSNRLLVASY. Residues 261–281 form a helical membrane-spanning segment; sequence ELTRWSSPAIALIFFFYFGFA. The Cytoplasmic segment spans residues 282–627; sequence QEARRNYAAA…ASPRTHRASV (346 aa). Disordered regions lie at residues 363–405, 479–505, and 518–627; these read LPRP…SSPI, TVPQHNTADEPASPALPDTPSSCSSSA, and LPST…RASV. A compositionally biased stretch (low complexity) spans 372–387; that stretch reads SSSGFSSSDSTRFGSS. 2 stretches are compositionally biased toward polar residues: residues 519 to 533 and 545 to 555; these read PSTTDVTRGTGSLPT and SLSQLFGISSM. Positions 569–607 are enriched in low complexity; that stretch reads ATGTASPTTTAPAPASTTIAPASATMAPATTTTAPTTIA.

The protein belongs to the G-protein coupled receptor 4 family.

Its subcellular location is the cell membrane. Its function is as follows. Receptor for the BAP2 pheromone, a prenylated mating factor. The receptor/pheromone interaction may have a role in the fusion of clamp cells. The polypeptide is Pheromone B alpha 2 receptor (BAR2) (Schizophyllum commune (Split gill fungus)).